The following is a 49-amino-acid chain: Large ribosomal subunit protein bL33B (49 aa).

It belongs to the bacterial ribosomal protein bL33 family.

This chain is Large ribosomal subunit protein bL33B, found in Latilactobacillus sakei subsp. sakei (strain 23K) (Lactobacillus sakei subsp. sakei).